The sequence spans 512 residues: Glycerol kinase (512 aa).

Threonine 13 contributes to the ADP binding site. Positions 13, 14, and 15 each coordinate ATP. Threonine 13 contributes to the sn-glycerol 3-phosphate binding site. Arginine 17 is an ADP binding site. The sn-glycerol 3-phosphate site is built by arginine 83, glutamate 84, tyrosine 135, and aspartate 252. Residues arginine 83, glutamate 84, tyrosine 135, aspartate 252, and glutamine 253 each contribute to the glycerol site. ADP contacts are provided by threonine 274 and glycine 318. The ATP site is built by threonine 274, glycine 318, glutamine 322, and glycine 419. ADP is bound by residues glycine 419 and asparagine 423.

The protein belongs to the FGGY kinase family.

The catalysed reaction is glycerol + ATP = sn-glycerol 3-phosphate + ADP + H(+). Its pathway is polyol metabolism; glycerol degradation via glycerol kinase pathway; sn-glycerol 3-phosphate from glycerol: step 1/1. Its activity is regulated as follows. Inhibited by fructose 1,6-bisphosphate (FBP). In terms of biological role, key enzyme in the regulation of glycerol uptake and metabolism. Catalyzes the phosphorylation of glycerol to yield sn-glycerol 3-phosphate. The sequence is that of Glycerol kinase from Corynebacterium kroppenstedtii (strain DSM 44385 / JCM 11950 / CIP 105744 / CCUG 35717).